Consider the following 104-residue polypeptide: Guanidinium exporter (104 aa).

The Cytoplasmic segment spans residues Met1–Trp3. Residues Ile4–Phe26 traverse the membrane as a helical segment. Over Thr27–Ser32 the chain is Periplasmic. A helical membrane pass occupies residues Ile33–Met50. Over Lys51–Pro54 the chain is Cytoplasmic. Residues Ala55–Val77 form a helical membrane-spanning segment. The Periplasmic portion of the chain corresponds to Phe78 to Asn83. The chain crosses the membrane as a helical span at residues Ile84 to Ala103. Position 104 (Ser104) is a topological domain, cytoplasmic.

The protein belongs to the drug/metabolite transporter (DMT) superfamily. Small multidrug resistance (SMR) (TC 2.A.7.1) family. Gdx/SugE subfamily.

It is found in the cell inner membrane. Its function is as follows. Guanidinium ion exporter. Couples guanidinium export to the proton motive force, exchanging one guanidinium ion for two protons. This Proteus vulgaris protein is Guanidinium exporter.